The following is an 856-amino-acid chain: Paladin (856 aa).

The segment covering 1–16 has biased composition (low complexity); the sequence is MGTTASTAQQTVSAGT. The interval 1–29 is disordered; that stretch reads MGTTASTAQQTVSAGTPFEGLQGSGTMDS. Residue Gly2 is the site of N-myristoyl glycine attachment. Position 86 is a phosphoserine (Ser86).

It belongs to the paladin family. As to expression, expressed in endothelial cells, and in certain larger vessels, in mural cells. In the brain, possibly expressed in microglia. Expressed in peripheral blood mononuclear cells (at protein level).

It localises to the cytoplasm. Its subcellular location is the cytosol. The chain is Paladin (PALD1) from Homo sapiens (Human).